Consider the following 405-residue polypeptide: S-adenosylmethionine synthase (405 aa).

141-146 is a binding site for ATP; sequence GQGSVD.

This sequence belongs to the AdoMet synthase 2 family. It depends on Mg(2+) as a cofactor.

The catalysed reaction is L-methionine + ATP + H2O = S-adenosyl-L-methionine + phosphate + diphosphate. It participates in amino-acid biosynthesis; S-adenosyl-L-methionine biosynthesis; S-adenosyl-L-methionine from L-methionine: step 1/1. Catalyzes the formation of S-adenosylmethionine from methionine and ATP. The protein is S-adenosylmethionine synthase of Methanococcus maripaludis (strain C6 / ATCC BAA-1332).